Reading from the N-terminus, the 381-residue chain is Putative F-box/kelch-repeat protein At1g60570 (381 aa).

In terms of domain architecture, F-box spans 19–65 (PTLIPSLPEELILSILARVSRLSYRSLSLVCKRFHSLLTSGEIYRFR). 4 Kelch repeats span residues 126–169 (KIYK…LIDG), 171–218 (IYVT…ERTN), 220–266 (LLVD…VIEN), and 269–314 (YDFF…DYGG).

In Arabidopsis thaliana (Mouse-ear cress), this protein is Putative F-box/kelch-repeat protein At1g60570.